We begin with the raw amino-acid sequence, 928 residues long: Protein ARABIDILLO 2 (928 aa).

Positions 3-8 (RRVRQR) match the Nuclear localization signal motif. The region spanning 37-83 (YVNWTSLPYDTVFHLFTRLNYRDRASLASTCRTWRSLGASSFLWSSL) is the F-box domain. ARM repeat units lie at residues 147 to 186 (AARH…KLRV), 237 to 278 (TSNI…KSSQ), 303 to 341 (KGKV…DLIR), 370 to 409 (SQGL…TFIV), 419 to 458 (CGRA…NLSV), 460 to 499 (AKVA…NLSV), 501 to 543 (EEHK…NLAA), 545 to 585 (DKCS…NLAA), 591 to 630 (GNNA…NLAF), 632 to 674 (DKNR…GLSV), 676 to 715 (EANS…NLSF), 717 to 757 (PGNA…YMFD), and 824 to 864 (IPEA…QFTI).

The protein belongs to the beta-catenin family. As to expression, expressed ubiquitously.

The protein localises to the nucleus. Functionally, promotes lateral root initiation and development, independently of auxin (IAA) and abscisis acid (ABA). This is Protein ARABIDILLO 2 from Arabidopsis thaliana (Mouse-ear cress).